The primary structure comprises 206 residues: A-type ATP synthase subunit D (206 aa).

The protein belongs to the V-ATPase D subunit family. As to quaternary structure, has multiple subunits with at least A(3), B(3), C, D, E, F, H, I and proteolipid K(x).

It localises to the cell membrane. Functionally, component of the A-type ATP synthase that produces ATP from ADP in the presence of a proton gradient across the membrane. The chain is A-type ATP synthase subunit D from Methanococcoides burtonii (strain DSM 6242 / NBRC 107633 / OCM 468 / ACE-M).